Consider the following 205-residue polypeptide: Protein-L-isoaspartate O-methyltransferase (205 aa).

Ser-56 is a catalytic residue.

The protein belongs to the methyltransferase superfamily. L-isoaspartyl/D-aspartyl protein methyltransferase family.

The protein localises to the cytoplasm. The enzyme catalyses [protein]-L-isoaspartate + S-adenosyl-L-methionine = [protein]-L-isoaspartate alpha-methyl ester + S-adenosyl-L-homocysteine. Its function is as follows. Catalyzes the methyl esterification of L-isoaspartyl residues in peptides and proteins that result from spontaneous decomposition of normal L-aspartyl and L-asparaginyl residues. It plays a role in the repair and/or degradation of damaged proteins. The sequence is that of Protein-L-isoaspartate O-methyltransferase from Aeromonas hydrophila subsp. hydrophila (strain ATCC 7966 / DSM 30187 / BCRC 13018 / CCUG 14551 / JCM 1027 / KCTC 2358 / NCIMB 9240 / NCTC 8049).